Reading from the N-terminus, the 217-residue chain is Monomethylamine corrinoid protein 2 (217 aa).

A B12-binding N-terminal domain is found at 1–91; that stretch reads MTNTEIFEKL…ELEKSKVEGE (91 aa). A B12-binding domain is found at 93–217; that stretch reads TGLAITFVAE…AAKVALNIMK (125 aa). H106 contributes to the methylcob(III)alamin binding site.

It belongs to the methylamine corrinoid protein family. In terms of assembly, can form a complex with MtmB.

It participates in one-carbon metabolism; methanogenesis from methylamine. Functionally, acts as a methyl group carrier between MtmB and MtbA. The polypeptide is Monomethylamine corrinoid protein 2 (mtmC2) (Methanosarcina acetivorans (strain ATCC 35395 / DSM 2834 / JCM 12185 / C2A)).